A 1432-amino-acid chain; its full sequence is DNA-directed RNA polymerase subunit beta (1432 aa).

Belongs to the RNA polymerase beta chain family. The RNAP catalytic core consists of 2 alpha, 1 beta, 1 beta' and 1 omega subunit. When a sigma factor is associated with the core the holoenzyme is formed, which can initiate transcription.

The enzyme catalyses RNA(n) + a ribonucleoside 5'-triphosphate = RNA(n+1) + diphosphate. In terms of biological role, DNA-dependent RNA polymerase catalyzes the transcription of DNA into RNA using the four ribonucleoside triphosphates as substrates. The chain is DNA-directed RNA polymerase subunit beta from Solibacter usitatus (strain Ellin6076).